The chain runs to 608 residues: Albumin (608 aa).

A signal peptide spans 1 to 18; it reads MKWVTFISLLFLFSSAYS. The propeptide occupies 19–24; sequence RGVFRR. 3 Albumin domains span residues 19-210, 211-403, and 404-601; these read RGVF…DALE, GKSL…EFQP, and LVDE…KLVE. A Cu cation-binding site is contributed by histidine 27. Residue serine 29 is modified to Phosphoserine. Ca(2+) is bound by residues glutamate 30 and aspartate 37. Cysteine 77 and cysteine 86 are joined by a disulfide. A phosphoserine mark is found at serine 82 and serine 89. Histidine 91 is a binding site for Zn(2+). Disulfide bonds link cysteine 99–cysteine 115, cysteine 114–cysteine 125, cysteine 148–cysteine 193, cysteine 192–cysteine 201, cysteine 224–cysteine 270, and cysteine 269–cysteine 277. Phosphothreonine is present on threonine 107. Lysine 229 is modified (N6-succinyllysine). Glutamate 268 is a binding site for Ca(2+). Residues histidine 271 and aspartate 273 each contribute to the Zn(2+) site. Ca(2+) is bound by residues aspartate 273, glutamate 276, aspartate 279, and aspartate 283. 8 disulfide bridges follow: cysteine 289/cysteine 303, cysteine 302/cysteine 313, cysteine 340/cysteine 385, cysteine 384/cysteine 393, cysteine 416/cysteine 462, cysteine 461/cysteine 472, cysteine 485/cysteine 501, and cysteine 500/cysteine 511. At serine 297 the chain carries Phosphoserine. Serine 443 is modified (phosphoserine). Residues threonine 444 and threonine 446 each carry the phosphothreonine modification. Lysine 460 bears the N6-succinyllysine mark. Residue serine 513 is modified to Phosphoserine. 2 cysteine pairs are disulfide-bonded: cysteine 538–cysteine 583 and cysteine 582–cysteine 591. Residue lysine 558 is modified to N6-methyllysine. The residue at position 570 (threonine 570) is a Phosphothreonine. The residue at position 588 (lysine 588) is an N6-succinyllysine.

Belongs to the ALB/AFP/VDB family. As to quaternary structure, interacts with FCGRT; this interaction regulates ALB homeostasis. Interacts with TASOR. In plasma, occurs in a covalently-linked complex with chromophore-bound alpha-1-microglobulin; this interaction does not prevent fatty acid binding to ALB. In terms of processing, phosphorylated by FAM20C in the extracellular medium. As to expression, plasma.

Its subcellular location is the secreted. Functionally, binds water, Ca(2+), Na(+), K(+), fatty acids, hormones, bilirubin and drugs. Its main function is the regulation of the colloidal osmotic pressure of blood. Major zinc transporter in plasma, typically binds about 80% of all plasma zinc. Major calcium and magnesium transporter in plasma, binds approximately 45% of circulating calcium and magnesium in plasma. Potentially has more than two calcium-binding sites and might additionally bind calcium in a non-specific manner. The shared binding site between zinc and calcium at residue Asp-273 suggests a crosstalk between zinc and calcium transport in the blood. The rank order of affinity is zinc &gt; calcium &gt; magnesium. Binds to the bacterial siderophore enterobactin and inhibits enterobactin-mediated iron uptake of E.coli from ferric transferrin, and may thereby limit the utilization of iron and growth of enteric bacteria such as E.coli. Does not prevent iron uptake by the bacterial siderophore aerobactin. The sequence is that of Albumin (ALB) from Oryctolagus cuniculus (Rabbit).